A 294-amino-acid chain; its full sequence is Nucleotide-binding protein Maqu_2718 (294 aa).

Residue 8–15 (GRSGSGKS) participates in ATP binding. Residue 61–64 (DARN) coordinates GTP.

It belongs to the RapZ-like family.

Displays ATPase and GTPase activities. The chain is Nucleotide-binding protein Maqu_2718 from Marinobacter nauticus (strain ATCC 700491 / DSM 11845 / VT8) (Marinobacter aquaeolei).